A 265-amino-acid polypeptide reads, in one-letter code: Glutamate racemase (265 aa).

Residues 7 to 8 and 39 to 40 each bind substrate; these read DS and YG. The active-site Proton donor/acceptor is Cys70. Substrate is bound at residue 71 to 72; the sequence is NT. Cys179 functions as the Proton donor/acceptor in the catalytic mechanism. 180-181 is a substrate binding site; sequence TH.

The protein belongs to the aspartate/glutamate racemases family.

It catalyses the reaction L-glutamate = D-glutamate. It functions in the pathway cell wall biogenesis; peptidoglycan biosynthesis. Provides the (R)-glutamate required for cell wall biosynthesis. The sequence is that of Glutamate racemase from Gloeobacter violaceus (strain ATCC 29082 / PCC 7421).